A 25-amino-acid chain; its full sequence is MSGRGKGGKGLGKGGAKRHRKVLRD.

Over residues 1 to 14 (MSGRGKGGKGLGKG) the composition is skewed to gly residues. Residues 1–25 (MSGRGKGGKGLGKGGAKRHRKVLRD) form a disordered region. An N-acetylserine modification is found at serine 2. 5 positions are modified to N6-acetyllysine: lysine 6, lysine 9, lysine 13, lysine 17, and lysine 21. Positions 15–25 (GAKRHRKVLRD) are enriched in basic residues. The DNA-binding element occupies 17–21 (KRHRK).

This sequence belongs to the histone H4 family. The nucleosome is a histone octamer containing two molecules each of H2A, H2B, H3 and H4 assembled in one H3-H4 heterotetramer and two H2A-H2B heterodimers. The octamer wraps approximately 147 bp of DNA.

The protein localises to the nucleus. It localises to the chromosome. In terms of biological role, core component of nucleosome. Nucleosomes wrap and compact DNA into chromatin, limiting DNA accessibility to the cellular machineries which require DNA as a template. Histones thereby play a central role in transcription regulation, DNA repair, DNA replication and chromosomal stability. DNA accessibility is regulated via a complex set of post-translational modifications of histones, also called histone code, and nucleosome remodeling. The sequence is that of Histone H4 from Medicago sativa (Alfalfa).